The primary structure comprises 279 residues: Ribonuclease Z (279 aa).

Positions 61, 63, 65, 66, 153, 176, and 240 each coordinate Zn(2+). Residue aspartate 65 is the Proton acceptor of the active site.

The protein belongs to the RNase Z family. In terms of assembly, homodimer. The cofactor is Zn(2+).

It carries out the reaction Endonucleolytic cleavage of RNA, removing extra 3' nucleotides from tRNA precursor, generating 3' termini of tRNAs. A 3'-hydroxy group is left at the tRNA terminus and a 5'-phosphoryl group is left at the trailer molecule.. Zinc phosphodiesterase, which displays some tRNA 3'-processing endonuclease activity. Probably involved in tRNA maturation, by removing a 3'-trailer from precursor tRNA. This chain is Ribonuclease Z, found in Mycobacterium marinum (strain ATCC BAA-535 / M).